Consider the following 494-residue polypeptide: UPF0371 protein SPy_1343/M5005_Spy1095 (494 aa).

Belongs to the UPF0371 family.

This chain is UPF0371 protein SPy_1343/M5005_Spy1095, found in Streptococcus pyogenes serotype M1.